The primary structure comprises 750 residues: Photosystem I P700 chlorophyll a apoprotein A1 (750 aa).

8 helical membrane passes run 70-93 (VFSA…FHGA), 156-179 (LYST…FHYH), 195-219 (LNHH…HVSL), 291-309 (TAHH…GHMY), 346-369 (WHAQ…HHMY), 385-411 (LSLF…IFMV), 433-455 (AIIS…LYIH), and 531-549 (FLVH…LILL). Residues cysteine 573 and cysteine 582 each contribute to the [4Fe-4S] cluster site. The next 2 membrane-spanning stretches (helical) occupy residues 589–610 (HVFL…HFSW) and 664–686 (LSAY…MFLF). Histidine 675 is a chlorophyll a' binding site. Methionine 683 and tyrosine 691 together coordinate chlorophyll a. Tryptophan 692 lines the phylloquinone pocket. Residues 724-744 (AVGVAHYLLGGIATTWAFFLA) form a helical membrane-spanning segment.

It belongs to the PsaA/PsaB family. The PsaA/B heterodimer binds the P700 chlorophyll special pair and subsequent electron acceptors. PSI consists of a core antenna complex that captures photons, and an electron transfer chain that converts photonic excitation into a charge separation. The eukaryotic PSI reaction center is composed of at least 11 subunits. P700 is a chlorophyll a/chlorophyll a' dimer, A0 is one or more chlorophyll a, A1 is one or both phylloquinones and FX is a shared 4Fe-4S iron-sulfur center. serves as cofactor.

It localises to the plastid. Its subcellular location is the chloroplast thylakoid membrane. The catalysed reaction is reduced [plastocyanin] + hnu + oxidized [2Fe-2S]-[ferredoxin] = oxidized [plastocyanin] + reduced [2Fe-2S]-[ferredoxin]. In terms of biological role, psaA and PsaB bind P700, the primary electron donor of photosystem I (PSI), as well as the electron acceptors A0, A1 and FX. PSI is a plastocyanin-ferredoxin oxidoreductase, converting photonic excitation into a charge separation, which transfers an electron from the donor P700 chlorophyll pair to the spectroscopically characterized acceptors A0, A1, FX, FA and FB in turn. Oxidized P700 is reduced on the lumenal side of the thylakoid membrane by plastocyanin. This chain is Photosystem I P700 chlorophyll a apoprotein A1, found in Marchantia polymorpha (Common liverwort).